A 156-amino-acid polypeptide reads, in one-letter code: AP-1 complex subunit sigma-1 (156 aa).

Belongs to the adaptor complexes small subunit family. As to quaternary structure, adapter protein complex 1 (AP-1) is a heterotetramer composed of two large adaptins (gamma-type subunit APL4 and beta-type subunit APL2), a medium adaptin (mu-type subunit APM1) and a small adaptin (sigma-type subunit APS1). AP-1 interacts with clathrin. Also a component of the AP-1R complex composed of at least APM2, APL4 and APS1.

The protein localises to the cytoplasm. It localises to the nucleus. It is found in the cytoplasmic vesicle. Its subcellular location is the clathrin-coated vesicle membrane. The protein resides in the endosome. The protein localises to the golgi apparatus. Functionally, component of the adapter complexes which link clathrin to receptors in coated vesicles. Clathrin-associated protein complexes are believed to interact with the cytoplasmic tails of membrane proteins, leading to their selection and concentration. AP19 is probably a subunit of the Golgi membrane adapter. Component of the AP-1-related (AP-1R) complex, an adapter protein complex that mediates sorting of cargo SNARE SNC1. In contrast to the APM1-containing AP-1 complex, AP-1R is incapable of sorting CHS3. This Saccharomyces cerevisiae (strain ATCC 204508 / S288c) (Baker's yeast) protein is AP-1 complex subunit sigma-1 (APS1).